Here is a 176-residue protein sequence, read N- to C-terminus: Peptide methionine sulfoxide reductase MsrA (176 aa).

Cys-10 is a catalytic residue.

It belongs to the MsrA Met sulfoxide reductase family.

It carries out the reaction L-methionyl-[protein] + [thioredoxin]-disulfide + H2O = L-methionyl-(S)-S-oxide-[protein] + [thioredoxin]-dithiol. It catalyses the reaction [thioredoxin]-disulfide + L-methionine + H2O = L-methionine (S)-S-oxide + [thioredoxin]-dithiol. In terms of biological role, has an important function as a repair enzyme for proteins that have been inactivated by oxidation. Catalyzes the reversible oxidation-reduction of methionine sulfoxide in proteins to methionine. This chain is Peptide methionine sulfoxide reductase MsrA, found in Sulfolobus acidocaldarius (strain ATCC 33909 / DSM 639 / JCM 8929 / NBRC 15157 / NCIMB 11770).